We begin with the raw amino-acid sequence, 123 residues long: Large ribosomal subunit protein uL14 (123 aa).

This sequence belongs to the universal ribosomal protein uL14 family. In terms of assembly, part of the 50S ribosomal subunit. Forms a cluster with proteins L3 and L19. In the 70S ribosome, L14 and L19 interact and together make contacts with the 16S rRNA in bridges B5 and B8.

Its function is as follows. Binds to 23S rRNA. Forms part of two intersubunit bridges in the 70S ribosome. The sequence is that of Large ribosomal subunit protein uL14 from Aliivibrio fischeri (strain ATCC 700601 / ES114) (Vibrio fischeri).